An 819-amino-acid polypeptide reads, in one-letter code: Leucine--tRNA ligase (819 aa).

A 'HIGH' region motif is present at residues 41–51; it reads PYPSGTLHVGH. The short motif at 578 to 582 is the 'KMSKS' region element; sequence KMSKS. Lys-581 is an ATP binding site.

The protein belongs to the class-I aminoacyl-tRNA synthetase family.

The protein resides in the cytoplasm. The enzyme catalyses tRNA(Leu) + L-leucine + ATP = L-leucyl-tRNA(Leu) + AMP + diphosphate. The polypeptide is Leucine--tRNA ligase (Fervidobacterium nodosum (strain ATCC 35602 / DSM 5306 / Rt17-B1)).